The following is a 104-amino-acid chain: Gastrin (104 aa).

A signal peptide spans 1–21 (MQRLCVYVLILALALATFSEA). The propeptide occupies 22–58 (SWKPRSRLQDAPSGPGANRGLEPHGLDQLGPASHHRR). Positions 22-70 (SWKPRSRLQDAPSGPGANRGLEPHGLDQLGPASHHRRQLGLQGPPQLVA) are disordered. A pyrrolidone carboxylic acid mark is found at Q59 and Q76. Y87 bears the Sulfotyrosine mark. F92 is modified (phenylalanine amide). The residue at position 96 (S96) is a Phosphoserine. A propeptide spanning residues 96–104 (SAEEGDQRP) is cleaved from the precursor.

It belongs to the gastrin/cholecystokinin family.

The protein localises to the secreted. Gastrin stimulates the stomach mucosa to produce and secrete hydrochloric acid and the pancreas to secrete its digestive enzymes. It also stimulates smooth muscle contraction and increases blood circulation and water secretion in the stomach and intestine. The protein is Gastrin (GAST) of Canis lupus familiaris (Dog).